The sequence spans 3375 residues: Basement membrane proteoglycan (3375 aa).

The first 22 residues, 1 to 22 (MKRSSTVLAALLALLLVATNDA), serve as a signal peptide directing secretion. An Ig-like C2-type 1 domain is found at 45–130 (VQITVFPSEK…NTVEARATLS (86 aa)). Cystine bridges form between C66/C114, C149/C161, C156/C174, C168/C183, C190/C202, C197/C215, C209/C224, C233/C246, C240/C259, C253/C268, and C293/C344. 3 LDL-receptor class A domains span residues 148–184 (QCMADEKACGNNECVKNDYVCDGEPDCRDRSDEANCP), 189–225 (TCEPNEFKCNNNKCVQKMWLCDGDDDCGDNSDELNCN), and 232–269 (DCKPTEFQCHDRRQCVPSSFHCDGTNDCHDGSDEVGCV). The Ig-like C2-type 2 domain maps to 271 to 355 (PTVVDPPQTN…AINVKGRVLA (85 aa)). Positions 364 to 385 (VDDPRPQPPQPPTAPPQRASCD) are disordered. Residues 369 to 378 (PQPPQPPTAP) are compositionally biased toward pro residues. 3 disulfides stabilise this stretch: C384-C400, C402-C411, and C414-C429. One can recognise a Laminin EGF-like 1; truncated domain in the interval 384–431 (CDTRGAVTPYPNNYGTCECKSQVTGPNCDQCKPGAFHLSEKSPEGCLK). The Laminin EGF-like 2; first part domain occupies 432–441 (CFCFGVSNDC). The region spanning 450-633 (KDRLMFAGDA…PDGLALEVEQ (184 aa)) is the Laminin IV type A 1 domain. Cystine bridges form between C634-C648, C636-C689, C691-C700, and C703-C718. A Laminin EGF-like 2; second part domain is found at 634–666 (CVCPPGYLGTSCEDCAPGYERSGYGPYLGTCVP). A Laminin EGF-like 3; truncated domain is found at 674-720 (CGPGAVAPTAPAQGQCQCKASVIGPNCDRCAPNSFGLAPTNPQGCIP). Residues 721–730 (CFCSGVTQQC) form the Laminin EGF-like 4; first part domain. Residues 740–921 (VSIDYARGDR…QGLTAAEVEQ (182 aa)) enclose the Laminin IV type A 2 domain. Residues 922 to 954 (CICPPGYVGTSCEDCAPGYSRTGGGLYLGLCEK) form the Laminin EGF-like 4; second part domain. 15 cysteine pairs are disulfide-bonded: C955-C964, C957-C971, C974-C983, C986-C1002, C1011-C1021, C1013-C1027, C1030-C1039, C1042-C1058, C1061-C1069, C1063-C1079, C1082-C1091, C1094-C1109, C1152-C1200, C1247-C1294, and C1338-C1384. Laminin EGF-like domains follow at residues 955-1004 (CECN…DCQP), 1011-1060 (CHCN…DCTP), and 1061-1111 (CPCP…VCEP). 15 Ig-like C2-type domains span residues 1126-1222 (PHEV…KRIS), 1226-1311 (PQPV…AVLE), 1319-1401 (PKVD…EPVQ), 1410-1499 (PQRG…ARLN), 1503-1585 (PQAI…RPVE), 1588-1680 (PARV…TPAT), 1690-1785 (PQVE…STLN), 1793-1878 (PRPV…VRLE), 1886-1970 (PTAV…GNVN), 1973-2069 (PSLT…IYIE), 2073-2163 (PSRI…AVHV), 2173-2260 (PKVE…TAVS), 2263-2343 (QQDK…GFVT), 2349-2435 (PDTI…RTVL), and 2446-2530 (TFTV…VDLQ). Polar residues predominate over residues 1388–1400 (DPSDNTPLQSEPV). 2 disordered regions span residues 1388 to 1426 (DPSDNTPLQSEPVQLNIRDPAPPQRGAAPQIDPPNQTVN) and 1478 to 1497 (EYECTSTEPDGSTQLSPPAR). N-linked (GlcNAc...) asparagine glycosylation occurs at N1422. 4 disulfide bridges follow: C1435–C1481, C1527–C1573, C1618–C1663, and C1719–C1767. Residues 1481–1497 (CTSTEPDGSTQLSPPAR) show a composition bias toward polar residues. A disordered region spans residues 1773-1792 (NSPPVKTNPSTLNVTPEGTP). The segment covering 1776–1788 (PVKTNPSTLNVTP) has biased composition (polar residues). Intrachain disulfides connect C1814-C1861, C1907-C1954, C1998-C2053, C2099-C2147, C2195-C2242, C2284-C2329, C2374-C2420, C2467-C2514, C2713-C2725, C2719-C2736, C2738-C2747, C2754-C2764, C2759-C2773, C2775-C2784, and C2935-C2960. Positions 1880-1918 (TEDQEPPTAVVEPRTWNGKPGERHQFRCITTGSPTPKIT) are disordered. A compositionally biased stretch (polar residues) spans 1907 to 1918 (CITTGSPTPKIT). An N-linked (GlcNAc...) asparagine glycan is attached at N2476. A Laminin G-like 1 domain is found at 2532–2713 (DDFIPVIDGE…PSSVVKYDAC (182 aa)). In terms of domain architecture, Laminin G-like 2 spans 2793-2960 (PLGFTSDTSF…LSSSGDISSC (168 aa)). A glycan (N-linked (GlcNAc...) asparagine) is linked at N2950. Residues 2952–2963 (SSSGDISSCEES) show a composition bias toward low complexity. A disordered region spans residues 2952–3124 (SSSGDISSCE…GTLPPDSSSE (173 aa)). Acidic residues-rich tracts occupy residues 2979 to 2990 (EEPEAVIEEPTT) and 2999 to 3010 (PITEEPTEEPTT). Positions 3011-3033 (TEEPTTTEEPTTTTEEPTTTTTE) are enriched in low complexity. Residues 3034–3044 (EPYHIYETSRD) are compositionally biased toward basic and acidic residues. A compositionally biased stretch (low complexity) spans 3049-3079 (IIIPVETTTTSTTTTSTTEEPEAEPALVLPT). Residues 3081 to 3094 (PVEENDVSDEEEEI) are compositionally biased toward acidic residues. Intrachain disulfides connect C3141–C3152, C3146–C3162, C3164–C3173, and C3333–C3359. N-linked (GlcNAc...) asparagine glycans are attached at residues N3143 and N3156. The 180-residue stretch at 3180–3359 (EHAARFDGDA…AIDGKNVKPC (180 aa)) folds into the Laminin G-like 3 domain.

As to quaternary structure, component of an integrin containing attachment complex, composed of at least pat-2, pat-3, pat-4, pat-6, unc-52, unc-97 and unc-112. In terms of tissue distribution, detected on embryonic and adult body wall muscle cells (at protein level). Found in the basement membrane of all contractile tissues (at protein level). Expressed in gonadal sheath cells and spermatheca.

It is found in the secreted. It localises to the extracellular space. The protein resides in the extracellular matrix. Its subcellular location is the basement membrane. The protein localises to the cytoplasm. It is found in the myofibril. It localises to the sarcomere. The protein resides in the m line. Component of an integrin containing attachment complex, which is required for muscle development and maintenance. Probable structural role in myofilament assembly and/or attachment of the myofilament lattice to the cell membrane. May be an extracellular anchor for integrin receptors in body wall muscles and myoepithelial sheath cells. During the formation of neuromuscular junctions at the larval stage, negatively regulates membrane protrusion from body wall muscles, probably downstream of the integrin complex formed by pat-2 and pat-3. Involved in ovulation. Required for normal lifespan. This is Basement membrane proteoglycan from Caenorhabditis elegans.